Here is a 327-residue protein sequence, read N- to C-terminus: 2-keto-3-deoxygluconate permease (327 aa).

10 helical membrane passes run 10–30, 42–62, 73–93, 95–115, 139–159, 163–183, 199–219, 224–244, 254–274, and 289–309; these read IPGG…TFSP, GMIT…GASI, KSGT…AIAS, IIPE…LALV, AGAF…IILG, IASF…VGFA, VQTL…LTVI, LLGI…LIIA, TAGI…VLIA, and SLVA…TSIW.

It belongs to the KdgT transporter family.

The protein localises to the cell inner membrane. The catalysed reaction is 2-dehydro-3-deoxy-D-gluconate(in) + H(+)(in) = 2-dehydro-3-deoxy-D-gluconate(out) + H(+)(out). Catalyzes the proton-dependent uptake of 2-keto-3-deoxygluconate (KDG) into the cell. This Escherichia coli O139:H28 (strain E24377A / ETEC) protein is 2-keto-3-deoxygluconate permease.